Consider the following 599-residue polypeptide: MSKARVLLKPSSLTTCLTRAKAFFSSVSQSRSISHQMEMGPSDSERYCYDPVLRWNPEVEDYFTKAYGPDHFARISKALTRPSSYSCIRVNTVKTTSDAVIEKLTKILNDSEEGLKLVQPDGSSPVTKCQIPGLDYVVFVNGSGPHKIEYDSGLENPPKEVLVSRKCAEAVLRGAQVYVPGVLACTAHVEKGDAVAVCVAMEQPGDEGDWSVNMTRGTTLQGLPTDPYYRERSGLYIGMGTAMLSRAGMFRVPNGIAVDLNHRVFRLPSLHNILEGEIFLQNLPSIIVAHALDPQKGERILDMCAAPGGKTTAIAILMNDEGEIVAADRSHNKVLVVQNLSAEMGFTCITTCKLDALKSVCLPTTLNESTILINGDNSSSMTSHSELSSNEEMTSVTSRRSEADKSCEKNDSTEQPNGGDNVSQAYIRKNKGRLKNGRGRTQCQGGRAGKSQGFPPNSFDRVLLDAPCSALGLRPRLFAGLETVVSLRNHGWYQRKMLDQAVQLVRVGGILVYSTCTINPSENEAVVRYALDKYRFLSLAPQHPRIGGPGLVGRCEFPDGYIEEWLKPGEEELVQKFDPSSELDTIGFFIAKFSVGPKD.

One can recognise a PUA domain in the interval 158–265 (PKEVLVSRKC…IAVDLNHRVF (108 aa)). S-adenosyl-L-methionine-binding positions include 304–310 (CAAPGGK), Asp328, and Asp355. A disordered region spans residues 372–454 (LINGDNSSSM…GGRAGKSQGF (83 aa)). Over residues 378–388 (SSSMTSHSELS) the composition is skewed to low complexity. A compositionally biased stretch (basic and acidic residues) spans 399–412 (RRSEADKSCEKNDS). A compositionally biased stretch (polar residues) spans 413–424 (TEQPNGGDNVSQ). A compositionally biased stretch (basic residues) spans 428–438 (RKNKGRLKNGR). Residue Asp465 participates in S-adenosyl-L-methionine binding. Catalysis depends on Cys516, which acts as the Nucleophile.

Belongs to the class I-like SAM-binding methyltransferase superfamily. RsmB/NOP family.

It localises to the nucleus. It is found in the nucleolus. The enzyme catalyses a cytidine in rRNA + S-adenosyl-L-methionine = a 5-methylcytidine in rRNA + S-adenosyl-L-homocysteine + H(+). Functionally, involved in ribosomal large subunit assembly. S-adenosyl-L-methionine-dependent methyltransferase that may methylates the C(5) position of cytosine in rRNA. May play a role in the regulation of the cell cycle and the increased nucleolar activity that is associated with the cell proliferation. Seems involved in the regulation of cell proliferation. The sequence is that of rRNA (cytosine-C(5))-methyltransferase NOP2C from Arabidopsis thaliana (Mouse-ear cress).